We begin with the raw amino-acid sequence, 206 residues long: Small ribosomal subunit protein uS4 (206 aa).

The S4 RNA-binding domain occupies 96 to 158 (SRLDNVVYRM…AKKQLRIQNA (63 aa)).

It belongs to the universal ribosomal protein uS4 family. Part of the 30S ribosomal subunit. Contacts protein S5. The interaction surface between S4 and S5 is involved in control of translational fidelity.

Functionally, one of the primary rRNA binding proteins, it binds directly to 16S rRNA where it nucleates assembly of the body of the 30S subunit. In terms of biological role, with S5 and S12 plays an important role in translational accuracy. This is Small ribosomal subunit protein uS4 from Francisella tularensis subsp. mediasiatica (strain FSC147).